Here is a 307-residue protein sequence, read N- to C-terminus: UPF0749 protein MT1871 (307 aa).

Positions methionine 1 to alanine 23 are cleaved as a signal peptide. The next 2 helical transmembrane spans lie at valine 67–valine 87 and valine 152–threonine 172.

The protein belongs to the UPF0749 family.

The protein localises to the cell membrane. In Mycobacterium tuberculosis (strain CDC 1551 / Oshkosh), this protein is UPF0749 protein MT1871.